Here is a 158-residue protein sequence, read N- to C-terminus: Protein EOLA1 (158 aa).

The region spanning 6-92 (LSFRQPYAGF…IAGLVDIGET (87 aa)) is the ASCH domain.

This sequence belongs to the EOLA family. Interacts with MT2A. As to expression, expressed primarily in heart, skeletal muscle, kidney, liver and placenta. Relatively high level of expression in spleen, colon and small intestine. Almost no expression in brain, thymus, lung and peripheral blood leukocytes. Expressed in epithelial cells (at protein level).

May play a role in cell protection during the inflammatory response. In epithelial cells, negatively regulates IL6 production and apoptosis through the regulation of MT2A expression. The chain is Protein EOLA1 from Homo sapiens (Human).